We begin with the raw amino-acid sequence, 564 residues long: 4-hydroxy-7-methoxy-3-oxo-3,4-dihydro-2H-1,4-benzoxazin-2-yl glucoside beta-D-glucosidase 1d, chloroplastic (564 aa).

The N-terminal 50 residues, 1–50, are a transit peptide targeting the chloroplast; that stretch reads MALLAAATLNPTTHLSLRSRAGRNSENLWLRSAASSQKSKGRFCNLTVRA. A beta-D-glucoside contacts are provided by residues Q92, H194, and 239 to 240; that span reads NE. The active-site Proton donor is the E240. A disulfide bridge links C259 with C265. Residues Y383, E456, W504, 511–512, and F520 contribute to the a beta-D-glucoside site; that span reads EW. The active-site Nucleophile is the E456.

Belongs to the glycosyl hydrolase 1 family. As to quaternary structure, homo- and heterohexamers. Expressed in young seedlings early after germination.

It localises to the plastid. It is found in the chloroplast. The catalysed reaction is Hydrolysis of terminal, non-reducing beta-D-glucosyl residues with release of beta-D-glucose.. It catalyses the reaction DIMBOA beta-D-glucoside + H2O = DIMBOA + D-glucose. It carries out the reaction DIBOA beta-D-glucoside + H2O = DIBOA + D-glucose. In terms of biological role, acts in defense of young plant parts against pests via the production of hydroxamic acids from hydroxamic acid glucosides. Enzymatic activity is highly correlated with plant growth. The preferred substrate is DIMBOA-beta-D-glucoside. The chain is 4-hydroxy-7-methoxy-3-oxo-3,4-dihydro-2H-1,4-benzoxazin-2-yl glucoside beta-D-glucosidase 1d, chloroplastic (GLU1D) from Triticum aestivum (Wheat).